The following is a 472-amino-acid chain: DNA-cytosine methyltransferase (472 aa).

The 371-residue stretch at phenylalanine 87–alanine 457 folds into the SAM-dependent MTase C5-type domain. Cysteine 177 is an active-site residue.

This sequence belongs to the class I-like SAM-binding methyltransferase superfamily. C5-methyltransferase family.

The catalysed reaction is a 2'-deoxycytidine in DNA + S-adenosyl-L-methionine = a 5-methyl-2'-deoxycytidine in DNA + S-adenosyl-L-homocysteine + H(+). This methylase recognizes the double-stranded sequence 5'-CCWGG-3', methylates C-2 on both strands. This is DNA-cytosine methyltransferase (dcm) from Escherichia coli O157:H7.